Consider the following 221-residue polypeptide: Dynein light chain Tctex-type 4 (221 aa).

2 disordered regions span residues 1 to 52 (MASR…SRRG) and 65 to 87 (NSLV…VPPL). Over residues 10 to 21 (RQEEENAKDSGR) the composition is skewed to basic and acidic residues. The residue at position 66 (Ser-66) is a Phosphoserine.

This sequence belongs to the dynein light chain Tctex-type family. In terms of assembly, interacts with ENG/endoglin, TGFBR2 and TGFBR3. Interacts with PPP1CC. As to expression, ubiquitously expressed. Expressed in testis (at protein level).

The protein localises to the cell projection. The protein resides in the cilium. Its subcellular location is the flagellum. It localises to the cytoplasmic vesicle. It is found in the secretory vesicle. The protein localises to the acrosome. The protein resides in the cytoplasm. Its subcellular location is the cytoskeleton. It localises to the cilium axoneme. It is found in the nucleus. The protein localises to the microtubule organizing center. The chain is Dynein light chain Tctex-type 4 from Homo sapiens (Human).